A 311-amino-acid polypeptide reads, in one-letter code: MAKSPQQPVIQSILDDAYHKFENDTSGKNADYIPALAKVDSAYFGLAVVTPHGKIYTKGDVSQPFSIQSISKVFTLALAMEQKGPQTIVDKIGVNATGLAFNSVTAIELNKARSVNPLVNAGAIATVSLLDGKNEKAKWSALSAWYDKFANRKLSVLEDVYKSESDTNGHNRAIAELLTSYDRFYGDVDLNLAIYTRQCSVAVTTKDLAVMASVFANNGVHPLTDKRLMSSDNVSRVLAVMTTAGLYENSGQWAYQVGLPAKSGVGGGIIAVSPGKFAVAVFSPRLDSAGNSIRAQKAIDYIAEKLHANIF.

Residues serine 69, asparagine 120, glutamate 164, asparagine 171, tyrosine 195, tyrosine 247, and valine 265 each contribute to the substrate site.

This sequence belongs to the glutaminase family. As to quaternary structure, homotetramer.

The enzyme catalyses L-glutamine + H2O = L-glutamate + NH4(+). The polypeptide is Glutaminase (Colwellia psychrerythraea (strain 34H / ATCC BAA-681) (Vibrio psychroerythus)).